Here is a 194-residue protein sequence, read N- to C-terminus: Ras-related protein Rab-22A (194 aa).

12–20 (GDTGVGKSS) is a binding site for GTP. The short motif at 34–42 (INPTIGASF) is the Effector region element. GTP is bound by residues 60 to 64 (DTAGQ), 118 to 121 (NKCD), and 148 to 150 (SAK). Residues 174 to 194 (PSGGKGFKLRRQPSEPKRSCC) form a disordered region. Basic and acidic residues predominate over residues 185 to 194 (QPSEPKRSCC). S-geranylgeranyl cysteine attachment occurs at residues Cys-193 and Cys-194.

It belongs to the small GTPase superfamily. Rab family. In terms of assembly, interacts directly with ZFYVE20. Binds EEA1. Interacts (in its GTP-bound form) with RABGEF1. Interacts (in its GTP-bound form) with RINL.

The protein localises to the endosome membrane. Its subcellular location is the cell membrane. The protein resides in the early endosome. It is found in the late endosome. It localises to the cell projection. The protein localises to the ruffle. Its subcellular location is the cytoplasmic vesicle. The protein resides in the phagosome. It is found in the phagosome membrane. Its function is as follows. Plays a role in endocytosis and intracellular protein transport. Mediates trafficking of TF from early endosomes to recycling endosomes. Required for NGF-mediated endocytosis of NTRK1, and subsequent neurite outgrowth. Binds GTP and GDP and has low GTPase activity. Alternates between a GTP-bound active form and a GDP-bound inactive form. This chain is Ras-related protein Rab-22A (RAB22A), found in Homo sapiens (Human).